Consider the following 513-residue polypeptide: ATP synthase subunit alpha (513 aa).

169-176 (GDRQTGKT) serves as a coordination point for ATP.

The protein belongs to the ATPase alpha/beta chains family. F-type ATPases have 2 components, CF(1) - the catalytic core - and CF(0) - the membrane proton channel. CF(1) has five subunits: alpha(3), beta(3), gamma(1), delta(1), epsilon(1). CF(0) has three main subunits: a(1), b(2) and c(9-12). The alpha and beta chains form an alternating ring which encloses part of the gamma chain. CF(1) is attached to CF(0) by a central stalk formed by the gamma and epsilon chains, while a peripheral stalk is formed by the delta and b chains.

It localises to the cell inner membrane. The catalysed reaction is ATP + H2O + 4 H(+)(in) = ADP + phosphate + 5 H(+)(out). Functionally, produces ATP from ADP in the presence of a proton gradient across the membrane. The alpha chain is a regulatory subunit. The sequence is that of ATP synthase subunit alpha from Ralstonia pickettii (strain 12J).